The following is a 2621-amino-acid chain: Nonribosomal peptide synthetase dtpA (2621 aa).

An adenylation 1 region spans residues C446–R844. Positions Q978–S1054 constitute a Carrier 1 domain. S1015 is modified (O-(pantetheine 4'-phosphoryl)serine). Residues E1095–Q1506 form a condensation 1 region. Positions S1534 to R1930 are adenylation 2. The region spanning Q2071–I2147 is the Carrier 2 domain. S2108 carries the post-translational modification O-(pantetheine 4'-phosphoryl)serine. The interval A2220 to D2618 is condensation 2.

It belongs to the NRP synthetase family.

It participates in alkaloid biosynthesis. Functionally, nonribosomal peptide synthetase; part of the gene cluster that mediates the biosynthesis of the dimeric diketopiperazine alkaloid ditryptophenaline. The nonribosomal peptide synthase dtpA accepts L-tryptophan and L-phenylalanine as its substrates and forms the phenylalanyl-tryptophanyl cyclic dipeptide product cyclophenylalanyltryptophenyl. The N-methyltransferase dtpB is responsible for the N-methylation of cyclophenylalanyltryptophenyl to yield cyclo-N-methylphenylalanyltryptophenyl. The cytochrome P450 monooxygenase is responsible not only for pyrroloindole ring formation but also for concurrent dimerization of N-methylphenylalanyltryptophanyl diketopiperazine monomers into a homodimeric product. The sequence is that of Nonribosomal peptide synthetase dtpA from Aspergillus flavus (strain ATCC 200026 / FGSC A1120 / IAM 13836 / NRRL 3357 / JCM 12722 / SRRC 167).